Here is a 522-residue protein sequence, read N- to C-terminus: Response regulator mcs4 (522 aa).

The segment at 148 to 274 (DSLESPVSAP…RSISHSSLYT (127 aa)) is disordered. The segment covering 174–194 (NLRNASRTRSHQTLPSSNVNK) has biased composition (polar residues). Basic and acidic residues predominate over residues 244–255 (RSDESTAEKLAK). The span at 260 to 274 (TPTNSRSISHSSLYT) shows a compositional bias: polar residues. The Response regulatory domain maps to 363-505 (NVLIVEDNII…WLEKKITEWG (143 aa)). A 4-aspartylphosphate modification is found at Asp-412.

It is found in the cytoplasm. Functionally, response regulator that coordinately controls the stress activated wak1-wis1-sty1 MAP kinase pathway and fission yeast cell cycle. This is Response regulator mcs4 (mcs4) from Schizosaccharomyces pombe (strain 972 / ATCC 24843) (Fission yeast).